The following is a 243-amino-acid chain: Small ribosomal subunit protein eS4 (243 aa).

The region spanning 37–99 is the S4 RNA-binding domain; it reads IPLALLLKHY…SDLYFRIVPD (63 aa).

This sequence belongs to the eukaryotic ribosomal protein eS4 family.

The sequence is that of Small ribosomal subunit protein eS4 (rps4e) from Sulfurisphaera tokodaii (strain DSM 16993 / JCM 10545 / NBRC 100140 / 7) (Sulfolobus tokodaii).